The following is a 735-amino-acid chain: Post-transcriptional regulator MKT1 (735 aa).

Positions 475-722 (QVIYNTMEET…ANERMKRAQK (248 aa)) are interaction with PBP1.

This sequence belongs to the XPG/RAD2 endonuclease family. Forms a complex composed of at least MKT1, PBP1, XAC1 and LSM12. Within the complex, interacts (via C-terminus) with PBP1; the interaction is direct. Interacts with RNA-binding protein ZC3H11 (via MKT1-binding motif); the interaction is direct. May interact with RNA-binding proteins CFB1 and CFB2. Interacts with the EIF4E6-EIF4G5 translation initiation complex via EIF4G5; the interaction with EIF4G5 is direct.

It is found in the cytoplasm. Its subcellular location is the cytosol. The protein localises to the stress granule. Functionally, involved in post-transcriptional regulation of gene expression. Promotes mRNA stabilization by recruiting a complex containing PBP1, LSM12 and XAC1 to mRNAs. Recruited to mRNAs by sequence-specific RNA binding proteins. May regulate translation through interactions with the EIF4E6-EIF4G5 translation initiation complex. This chain is Post-transcriptional regulator MKT1, found in Trypanosoma brucei brucei (strain 927/4 GUTat10.1).